The chain runs to 280 residues: Acetyl-coenzyme A carboxylase carboxyl transferase subunit beta (280 aa).

One can recognise a CoA carboxyltransferase N-terminal domain in the interval 28 to 280 (IMTKCPSCRT…TLTKLLAMHQ (253 aa)). 4 residues coordinate Zn(2+): Cys-32, Cys-35, Cys-51, and Cys-54. Residues 32 to 54 (CPSCRTIMYTKDLKKNLSVCRTC) form a C4-type zinc finger.

Belongs to the AccD/PCCB family. As to quaternary structure, acetyl-CoA carboxylase is a heterohexamer composed of biotin carboxyl carrier protein (AccB), biotin carboxylase (AccC) and two subunits each of ACCase subunit alpha (AccA) and ACCase subunit beta (AccD). The cofactor is Zn(2+).

It localises to the cytoplasm. The enzyme catalyses N(6)-carboxybiotinyl-L-lysyl-[protein] + acetyl-CoA = N(6)-biotinyl-L-lysyl-[protein] + malonyl-CoA. It participates in lipid metabolism; malonyl-CoA biosynthesis; malonyl-CoA from acetyl-CoA: step 1/1. Component of the acetyl coenzyme A carboxylase (ACC) complex. Biotin carboxylase (BC) catalyzes the carboxylation of biotin on its carrier protein (BCCP) and then the CO(2) group is transferred by the transcarboxylase to acetyl-CoA to form malonyl-CoA. The sequence is that of Acetyl-coenzyme A carboxylase carboxyl transferase subunit beta from Shouchella clausii (strain KSM-K16) (Alkalihalobacillus clausii).